The following is a 59-amino-acid chain: ATP synthase protein 8 (59 aa).

The chain crosses the membrane as a helical span at residues Leu7–Glu23.

This sequence belongs to the ATPase protein 8 family. As to quaternary structure, F-type ATPases have 2 components, CF(1) - the catalytic core - and CF(0) - the membrane proton channel.

The protein resides in the mitochondrion membrane. Its function is as follows. Mitochondrial membrane ATP synthase (F(1)F(0) ATP synthase or Complex V) produces ATP from ADP in the presence of a proton gradient across the membrane which is generated by electron transport complexes of the respiratory chain. F-type ATPases consist of two structural domains, F(1) - containing the extramembraneous catalytic core and F(0) - containing the membrane proton channel, linked together by a central stalk and a peripheral stalk. During catalysis, ATP synthesis in the catalytic domain of F(1) is coupled via a rotary mechanism of the central stalk subunits to proton translocation. Part of the complex F(0) domain. Minor subunit located with subunit a in the membrane. This chain is ATP synthase protein 8 (MT-ATP8), found in Oenothera berteroana (Bertero's evening primrose).